The sequence spans 86 residues: U18-theraphotoxin-Cg1a (86 aa).

The N-terminal stretch at 1–20 (KASVLITLAVLGVMFVWTSA) is a signal peptide. The propeptide occupies 21 to 49 (AELEERGSDQRDSPALIKSMAKVFQSEER). Disulfide bonds link Cys51–Cys65, Cys58–Cys70, and Cys64–Cys78. Phe84 is modified (phenylalanine amide).

It belongs to the neurotoxin 10 (Hwtx-1) family. 47 subfamily. In terms of tissue distribution, expressed by the venom gland.

The protein resides in the secreted. In terms of biological role, inhibits TTX-sensitive and TTX-insensitive sodium currents (IC(50) is 0.6 uM and 0.95 uM respectively) on rat dorsal root ganglion (DRG) neurons. Inhibits muscular subtypes sodium channels Nav1.4/SCN4A and Nav1.5/SCN5A transiently transfected in to HEK293 cells (IC(50) is 5.42 uM and 0.45 uM respectively). Also blocks Kv2.1/KCNB1 potassium channels expressed in X.laevis oocytes with an IC(50) of 604 nM. Injection of the toxin in mice was immediately followed by general ataxia, lack of response to stimuli and semiparalysis. This chain is U18-theraphotoxin-Cg1a, found in Chilobrachys guangxiensis (Chinese earth tiger tarantula).